The primary structure comprises 118 residues: uncharacterized protein (118 aa).

A helical transmembrane segment spans residues 95–115 (IIINLVIILAMYAPEIIGKLL).

This sequence belongs to the M.jannaschii MJ0023/MJ0349/MJ1072/MJ1074/MJ1107/MJECL16 family.

It localises to the membrane. This is an uncharacterized protein from Methanocaldococcus jannaschii (strain ATCC 43067 / DSM 2661 / JAL-1 / JCM 10045 / NBRC 100440) (Methanococcus jannaschii).